The sequence spans 150 residues: Histone H2A.1 (150 aa).

Residue Met1 is modified to N-acetylmethionine. Basic residues-rich tracts occupy residues 1 to 24 and 141 to 150; these read MDASTKTKKGAGGRKGGGPRKKSV and SKAKKSPKKA. Disordered regions lie at residues 1–26 and 128–150; these read MDASTKTKKGAGGRKGGGPRKKSVTR and RKENAAASTPKSPSKAKKSPKKA. Short sequence motifs (SPKK motif) lie at residues 139-142 and 146-149; these read SPSK and SPKK.

This sequence belongs to the histone H2A family. In terms of assembly, the nucleosome is a histone octamer containing two molecules each of H2A, H2B, H3 and H4 assembled in one H3-H4 heterotetramer and two H2A-H2B heterodimers. The octamer wraps approximately 147 bp of DNA. High expression in root meristematic tissues, moderate in whole shoot and very low in mature leaves.

It localises to the nucleus. Its subcellular location is the chromosome. Functionally, core component of nucleosome. Nucleosomes wrap and compact DNA into chromatin, limiting DNA accessibility to the cellular machineries which require DNA as a template. Histones thereby play a central role in transcription regulation, DNA repair, DNA replication and chromosomal stability. DNA accessibility is regulated via a complex set of post-translational modifications of histones, also called histone code, and nucleosome remodeling. This is Histone H2A.1 from Pisum sativum (Garden pea).